The primary structure comprises 113 residues: MENFLQQLKTLSSAEDFMQYFGVPFDQKVMNISRLHILKRFFQYLRQETPLAQTDELQMFTAYRALLTKAYGDFVTSTPAQEKVFKVFQDTDGKQHVTLDSLRASMPQRAAAA.

It belongs to the NifW family. Homotrimer; associates with NifD.

Its function is as follows. May protect the nitrogenase Fe-Mo protein from oxidative damage. The protein is Nitrogenase-stabilizing/protective protein NifW of Polaromonas naphthalenivorans (strain CJ2).